The chain runs to 875 residues: Neurotrypsin (875 aa).

A signal peptide spans 1–20; the sequence is MTLARFVLALVLGALPEVVG. N-linked (GlcNAc...) asparagine glycosylation is present at asparagine 26. The disordered stretch occupies residues 29–68; the sequence is LHHRHRHSPPPGPQYPYYLPTHQRPPRTRPPPPLPRFSRP. Positions 93–165 constitute a Kringle domain; that stretch reads CPPGEPWVSV…GKVDWGYCDC (73 aa). Disulfide bonds link cysteine 93-cysteine 165, cysteine 109-cysteine 149, cysteine 138-cysteine 163, cysteine 195-cysteine 259, cysteine 208-cysteine 269, cysteine 239-cysteine 249, cysteine 305-cysteine 369, cysteine 318-cysteine 379, cysteine 349-cysteine 359, cysteine 412-cysteine 475, cysteine 425-cysteine 485, cysteine 455-cysteine 465, cysteine 525-cysteine 589, cysteine 538-cysteine 599, cysteine 569-cysteine 579, cysteine 619-cysteine 750, cysteine 661-cysteine 677, cysteine 765-cysteine 831, cysteine 794-cysteine 808, and cysteine 821-cysteine 850. SRCR domains follow at residues 170-271, 280-381, 387-487, and 500-601; these read VRLR…TCSF, IRLV…SCTP, IRLA…ACYP, and VRLM…ICDY. The segment at 619–630 is zymogen activation region; the sequence is CGLRLLHRRQKR. The Peptidase S1 domain maps to 631–874; that stretch reads IIGGKNSLRG…FVPWIKSVTK (244 aa). The active-site Charge relay system is the histidine 676. Asparagine 683 carries an N-linked (GlcNAc...) asparagine glycan. The active-site Charge relay system is the aspartate 726. Serine 825 acts as the Charge relay system in catalysis.

This sequence belongs to the peptidase S1 family.

It localises to the secreted. Plays a role in neuronal plasticity and the proteolytic action may subserve structural reorganizations associated with learning and memory operations. The protein is Neurotrypsin (PRSS12) of Trachypithecus phayrei (Phayre's leaf monkey).